Here is a 151-residue protein sequence, read N- to C-terminus: Ocs element-binding factor 1 (151 aa).

Over residues 1-17 the composition is skewed to polar residues; the sequence is MSSSSLSPTAGRTSGSD. A disordered region spans residues 1–47; sequence MSSSSLSPTAGRTSGSDGDSAADTHRREKRRLSNRESARRSRLRKQQ. The segment covering 22–39 has biased composition (basic and acidic residues); that stretch reads ADTHRREKRRLSNRESAR. One can recognise a bZIP domain in the interval 24 to 87; that stretch reads THRREKRRLS…TRVEQENTVL (64 aa). The segment at 26-45 is basic motif; that stretch reads RREKRRLSNRESARRSRLRK. The leucine-zipper stretch occupies residues 52–59; sequence LVQEVARL.

The protein belongs to the bZIP family. In terms of tissue distribution, roots and shoots of young plants, and basal portion of leaves.

It localises to the nucleus. Functionally, may contribute to developmentally specific patterns of gene expression. Binds specifically to ocs elements which are transcriptional enhancer found in the promoters of several plant genes. OCSBF-1 is able to bind to a site within each half of the ocs element as well as to animal AP-1 and CREB sites. This is Ocs element-binding factor 1 (OBF1) from Zea mays (Maize).